The following is a 235-amino-acid chain: 1-(5-phosphoribosyl)-5-[(5-phosphoribosylamino)methylideneamino] imidazole-4-carboxamide isomerase (235 aa).

Asp8 serves as the catalytic Proton acceptor. The Proton donor role is filled by Asp128.

The protein belongs to the HisA/HisF family.

The protein localises to the cytoplasm. It carries out the reaction 1-(5-phospho-beta-D-ribosyl)-5-[(5-phospho-beta-D-ribosylamino)methylideneamino]imidazole-4-carboxamide = 5-[(5-phospho-1-deoxy-D-ribulos-1-ylimino)methylamino]-1-(5-phospho-beta-D-ribosyl)imidazole-4-carboxamide. The protein operates within amino-acid biosynthesis; L-histidine biosynthesis; L-histidine from 5-phospho-alpha-D-ribose 1-diphosphate: step 4/9. The protein is 1-(5-phosphoribosyl)-5-[(5-phosphoribosylamino)methylideneamino] imidazole-4-carboxamide isomerase of Thermus thermophilus (strain ATCC 27634 / DSM 579 / HB8).